Reading from the N-terminus, the 832-residue chain is DEAD-box ATP-dependent RNA helicase 13 (832 aa).

Residues 1–12 (MAAAPPPPPPPQ) are compositionally biased toward pro residues. Disordered regions lie at residues 1 to 59 (MAAA…TMVE) and 91 to 173 (VEDL…DDNV). Residues 29 to 42 (RKGKKSRGAKKPRR) show a composition bias toward basic residues. Residues 43 to 55 (AAAAAAASTSSAG) are compositionally biased toward low complexity. The span at 105 to 114 (QKKKKRKKRK) shows a compositional bias: basic residues. Acidic residues predominate over residues 128–137 (LVVECEEEGE). Residues 141–155 (KRVKKKRRSRKKRKV) show a composition bias toward basic residues. The span at 156–167 (KEMEEKMESKED) shows a compositional bias: basic and acidic residues. The short motif at 198 to 226 (YAWRELRLHPLLITAVRRLGFKEPTPIQK) is the Q motif element. The Helicase ATP-binding domain maps to 230-447 (PAAAHQGKDV…KLKRGLVTAK (218 aa)). Residue 243 to 250 (AETGSGKT) coordinates ATP. Residues 371–374 (DEAD) carry the DEAD box motif. Residues 484-645 (KLEESFIECS…QFPVDHAYMP (162 aa)) enclose the Helicase C-terminal domain. The tract at residues 800–832 (RRLAENWRRKKQKEKKSTREQKRKEKRIAKERD) is disordered. Residues 814-832 (KKSTREQKRKEKRIAKERD) show a composition bias toward basic and acidic residues.

Belongs to the DEAD box helicase family. DDX24/MAK5 subfamily.

The enzyme catalyses ATP + H2O = ADP + phosphate + H(+). The sequence is that of DEAD-box ATP-dependent RNA helicase 13 from Oryza sativa subsp. japonica (Rice).